A 47-amino-acid polypeptide reads, in one-letter code: Large ribosomal subunit protein bL34 (47 aa).

2 stretches are compositionally biased toward basic residues: residues 1–22 (MAKG…HGFR) and 36–47 (ARRRKGRKSLTA). A disordered region spans residues 1-47 (MAKGKRTFQPNNRRRSRVHGFRSRMSTRAGRAIVSARRRKGRKSLTA).

It belongs to the bacterial ribosomal protein bL34 family.

The chain is Large ribosomal subunit protein bL34 from Corynebacterium kroppenstedtii (strain DSM 44385 / JCM 11950 / CIP 105744 / CCUG 35717).